A 304-amino-acid polypeptide reads, in one-letter code: Virulence protein VirA (304 aa).

Could be involved in the biosynthesis of a major surface antigen important for virulence. The protein is Virulence protein VirA (virA) of Vibrio anguillarum (strain ATCC 68554 / 775) (Listonella anguillarum).